The following is a 2647-amino-acid chain: Filamin-A (2647 aa).

Low complexity predominate over residues M1–A15. The segment at M1 to A39 is disordered. N-acetylserine is present on S2. The tract at residues S2–P274 is actin-binding. Position 11 is a phosphoserine (S11). Residues D22–A39 are compositionally biased toward basic and acidic residues. Residues K42, K43, and K135 each participate in a glycyl lysine isopeptide (Lys-Gly) (interchain with G-Cter in ubiquitin) cross-link. Calponin-homology (CH) domains are found at residues K43 to S149 and Q166 to L269. The segment at P271 to T294 is disordered. Filamin repeat units follow at residues R276–V374, K376–V474, G475–V570, G571–I663, P667–V763, G764–V866, E867–V965, S966–A1061, V1062–V1154, V1155–V1249, E1250–V1349, T1350–V1442, H1443–V1539, L1540–A1636, and V1649–A1740. K299 participates in a covalent cross-link: Glycyl lysine isopeptide (Lys-Gly) (interchain with G-Cter in SUMO1); alternate. K299 participates in a covalent cross-link: Glycyl lysine isopeptide (Lys-Gly) (interchain with G-Cter in SUMO2); alternate. N6-acetyllysine is present on residues K376 and K508. An N6-acetyllysine mark is found at K700, K781, K837, K865, and K906. Phosphoserine occurs at positions 968 and 1055. At K1071 the chain carries N6-acetyllysine; alternate. Residue K1071 is modified to N6-succinyllysine; alternate. 2 positions are modified to phosphoserine: S1081 and S1084. T1089 carries the phosphothreonine modification. Phosphoserine occurs at positions 1301 and 1338. The disordered stretch occupies residues H1361 to G1382. N6-acetyllysine is present on K1372. Phosphoserine is present on residues S1459 and S1533. The interaction with furin stretch occupies residues P1490–A1607. Position 1538 is an N6-acetyllysine (K1538). Residues S1630 and S1734 each carry the phosphoserine modification. The interval L1741–V1778 is hinge 1. 8 Filamin repeats span residues G1779 to V1860, D1861 to A1950, R1951 to I2039, S2042 to S2131, V2132 to V2230, L2233 to V2325, S2327 to V2420, and G2424 to V2516. S1835 is subject to Phosphoserine. S1967, S2053, S2128, S2152, S2158, S2163, S2180, S2284, S2327, and S2329 each carry phosphoserine. A Phosphothreonine modification is found at T2336. Phosphoserine is present on residues S2338, S2370, S2414, S2510, S2523, and S2526. The hinge 2 stretch occupies residues T2517–G2551. The self-association site, tail stretch occupies residues T2517–P2647. One copy of the Filamin 24 repeat lies at P2552–V2646. At K2569 the chain carries N6-acetyllysine; alternate. The residue at position 2569 (K2569) is an N6-succinyllysine; alternate. Residue K2575 is modified to N6-acetyllysine. Residue T2599 is modified to Phosphothreonine. Residues K2607 and K2621 each carry the N6-acetyllysine modification.

Belongs to the filamin family. As to quaternary structure, homodimer. Interacts with PDLIM2. Interacts with RFLNA and RFLNB. Interacts with FCGR1A, FLNB, FURIN, HSPB7, INPPL1, KCND2, MYOT, MYOZ1, ARHGAP24, PSEN1, PSEN2 and ECSCR. Also interacts with various other binding partners in addition to filamentous actin. Interacts (via N-terminus) with MIS18BP1 (via N-terminus). Interacts (via N-terminus) with TAF1B. Interacts with TMEM67 (via C-terminus) and MKS1. Interacts (via actin-binding domain) with MICALL2 (via CH domain). Interacts (via filamin repeat 5) with SYK; docks SYK to the plasma membrane. Interacts (via filamin repeats 19 and 21) with DRD3; increased PKA-mediated phosphorylation at Ser-2152. Interacts (via filamin repeat 21) with MAS1, AGTR1 and ADRA1D; increases PKA-mediated phosphorylation of FLNA at Ser-2152. Interacts (via filamin repeats 4, 9, 12, 17, 19, 21, and 23) with GP1BA (high affinity), ITGB7, ITGB2 and FBLIM1. Interacts with CEACAM1 (via cytoplasmic domain); inhibits cell migration and cell scattering by interfering with the interaction between FLNA and RALA. Interacts with FOXC1. Interacts (via calponin-homology (CH) domain 1 and filamin repeat 24) with CRMP1; the interaction alters FLNA ternary structure and thus promotes FLNA dissociation from F-actin. Interacts with DPYSL3/CRMP3 and DPYSL4/CRMP4. In terms of assembly, interacts with integrin ITGB1 isoform 1/beta-1A and isoform 5/beta-1D. Interacts with LUZP1; the interaction is not necessary for colocalization of LUZP1 with F-actin. Phosphorylation at Ser-2152 is negatively regulated by the autoinhibited conformation of filamin repeats 19-21. Ligand binding induces a conformational switch triggering phosphorylation at Ser-2152 by PKA. Post-translationally, phosphorylation extent changes in response to cell activation. In terms of processing, polyubiquitination in the CH1 domain by a SCF-like complex containing ASB2 leads to proteasomal degradation. Prior dissociation from actin may be required to expose the target lysines. Ubiquitinated in endothelial cells by RNF213 downstream of the non-canonical Wnt signaling pathway, leading to its degradation by the proteasome. Ubiquitous.

It localises to the cytoplasm. The protein resides in the cell cortex. It is found in the cytoskeleton. Its subcellular location is the perikaryon. The protein localises to the cell projection. It localises to the growth cone. The protein resides in the podosome. Its function is as follows. Promotes orthogonal branching of actin filaments and links actin filaments to membrane glycoproteins. Anchors various transmembrane proteins to the actin cytoskeleton and serves as a scaffold for a wide range of cytoplasmic signaling proteins. Interaction with FLNB may allow neuroblast migration from the ventricular zone into the cortical plate. Tethers cell surface-localized furin, modulates its rate of internalization and directs its intracellular trafficking. Involved in ciliogenesis. Plays a role in cell-cell contacts and adherens junctions during the development of blood vessels, heart and brain organs. Plays a role in platelets morphology through interaction with SYK that regulates ITAM- and ITAM-like-containing receptor signaling, resulting in by platelet cytoskeleton organization maintenance. During the axon guidance process, required for growth cone collapse induced by SEMA3A-mediated stimulation of neurons. This Homo sapiens (Human) protein is Filamin-A (FLNA).